We begin with the raw amino-acid sequence, 61 residues long: Bactericidin B-5P (61 aa).

The first 22 residues, Met1 to Ala22, serve as a signal peptide directing secretion. Positions Ala23 to Pro24 are cleaved as a propeptide — removed by a dipeptidylpeptidase. Residue Gly60 is modified to Glycine amide.

This sequence belongs to the cecropin family.

Its subcellular location is the secreted. In terms of biological role, cecropins have lytic and antibacterial activity against several Gram-positive and Gram-negative bacteria. This chain is Bactericidin B-5P, found in Manduca sexta (Tobacco hawkmoth).